The chain runs to 260 residues: Thiazole synthase (260 aa).

K96 serves as the catalytic Schiff-base intermediate with DXP. 1-deoxy-D-xylulose 5-phosphate contacts are provided by residues G157, 184 to 185, and 206 to 207; these read AG and NT.

It belongs to the ThiG family. As to quaternary structure, homotetramer. Forms heterodimers with either ThiH or ThiS.

The protein localises to the cytoplasm. The enzyme catalyses [ThiS sulfur-carrier protein]-C-terminal-Gly-aminoethanethioate + 2-iminoacetate + 1-deoxy-D-xylulose 5-phosphate = [ThiS sulfur-carrier protein]-C-terminal Gly-Gly + 2-[(2R,5Z)-2-carboxy-4-methylthiazol-5(2H)-ylidene]ethyl phosphate + 2 H2O + H(+). It participates in cofactor biosynthesis; thiamine diphosphate biosynthesis. Functionally, catalyzes the rearrangement of 1-deoxy-D-xylulose 5-phosphate (DXP) to produce the thiazole phosphate moiety of thiamine. Sulfur is provided by the thiocarboxylate moiety of the carrier protein ThiS. In vitro, sulfur can be provided by H(2)S. In Rhodopseudomonas palustris (strain TIE-1), this protein is Thiazole synthase.